The primary structure comprises 296 residues: Probable AP endonuclease (296 aa).

Cys-16 and Cys-20 are disulfide-bonded. 8 residues coordinate Zn(2+): His-78, His-115, Glu-142, His-182, His-218, Asp-231, His-233, and Glu-271.

This sequence belongs to the AP endonuclease 2 family. Requires Zn(2+) as cofactor.

The protein resides in the host nucleus. Its subcellular location is the host cytoplasm. It is found in the virion. Functionally, endonuclease that plays a role in DNA repair. Cleaves phosphodiester bonds on the 5' side of apurinic or apyrimidinic sites (AP sites). In addition to endonuclease activity, the ASFV enzyme has a proofreading 3'-5' exonuclease activity that is considerably more efficient in the elimination of a mismatch than in that of a correctly paired base. Displays 3'-phosphatase and 3'-repair diesterase activities. The single nucleotide gaps generated by the AP endonuclease are filled by the viral AP endonuclease and DNA ligase. This Ornithodoros (relapsing fever ticks) protein is Probable AP endonuclease.